The sequence spans 311 residues: Probable lipid kinase YegS-like (311 aa).

In terms of domain architecture, DAGKc spans 9–140; that stretch reads EHDGDTWLIL…VDVGTLGDDY (132 aa). Residues Thr47, 73 to 79, and Ser102 contribute to the ATP site; that span reads GDGTVNE. Mg(2+)-binding residues include Lys221, Asp224, and Leu226. Glu281 functions as the Proton acceptor in the catalytic mechanism.

Belongs to the diacylglycerol/lipid kinase family. YegS lipid kinase subfamily. Mg(2+) serves as cofactor. It depends on Ca(2+) as a cofactor.

It localises to the cytoplasm. Functionally, probably phosphorylates lipids; the in vivo substrate is unknown. The protein is Probable lipid kinase YegS-like of Chromohalobacter salexigens (strain ATCC BAA-138 / DSM 3043 / CIP 106854 / NCIMB 13768 / 1H11).